The following is a 78-amino-acid chain: UPF0235 protein AF_2072 (78 aa).

The protein belongs to the UPF0235 family.

This Archaeoglobus fulgidus (strain ATCC 49558 / DSM 4304 / JCM 9628 / NBRC 100126 / VC-16) protein is UPF0235 protein AF_2072.